The primary structure comprises 421 residues: Enolase (421 aa).

Position 165 (Gln-165) interacts with (2R)-2-phosphoglycerate. Glu-207 acts as the Proton donor in catalysis. Residues Asp-244, Glu-285, and Asp-312 each contribute to the Mg(2+) site. The (2R)-2-phosphoglycerate site is built by Lys-337, Arg-366, Ser-367, and Lys-388. The active-site Proton acceptor is Lys-337.

The protein belongs to the enolase family. It depends on Mg(2+) as a cofactor.

The protein localises to the cytoplasm. It is found in the secreted. It localises to the cell surface. The catalysed reaction is (2R)-2-phosphoglycerate = phosphoenolpyruvate + H2O. It functions in the pathway carbohydrate degradation; glycolysis; pyruvate from D-glyceraldehyde 3-phosphate: step 4/5. Catalyzes the reversible conversion of 2-phosphoglycerate (2-PG) into phosphoenolpyruvate (PEP). It is essential for the degradation of carbohydrates via glycolysis. The sequence is that of Enolase from Ehrlichia canis (strain Jake).